Here is an 878-residue protein sequence, read N- to C-terminus: Alanine--tRNA ligase (878 aa).

4 residues coordinate Zn(2+): histidine 558, histidine 562, cysteine 663, and histidine 667.

The protein belongs to the class-II aminoacyl-tRNA synthetase family. The cofactor is Zn(2+).

It is found in the cytoplasm. It catalyses the reaction tRNA(Ala) + L-alanine + ATP = L-alanyl-tRNA(Ala) + AMP + diphosphate. In terms of biological role, catalyzes the attachment of alanine to tRNA(Ala) in a two-step reaction: alanine is first activated by ATP to form Ala-AMP and then transferred to the acceptor end of tRNA(Ala). Also edits incorrectly charged Ser-tRNA(Ala) and Gly-tRNA(Ala) via its editing domain. The sequence is that of Alanine--tRNA ligase from Mycoplasmopsis synoviae (strain 53) (Mycoplasma synoviae).